Consider the following 419-residue polypeptide: L-rhamnose isomerase (419 aa).

Mn(2+)-binding residues include H262, D294, and D296.

Belongs to the rhamnose isomerase family. Homotetramer. Requires Mn(2+) as cofactor.

It localises to the cytoplasm. The enzyme catalyses L-rhamnopyranose = L-rhamnulose. The protein operates within carbohydrate degradation; L-rhamnose degradation; glycerone phosphate from L-rhamnose: step 1/3. In terms of biological role, catalyzes the interconversion of L-rhamnose and L-rhamnulose. This Salmonella newport (strain SL254) protein is L-rhamnose isomerase.